Reading from the N-terminus, the 318-residue chain is tRNA dimethylallyltransferase (318 aa).

Position 16–23 (16–23) interacts with ATP; sequence GPTASGKS. 18 to 23 serves as a coordination point for substrate; that stretch reads TASGKS. Interaction with substrate tRNA stretches follow at residues 41–44 and 165–169; these read DSRQ and QRLIR.

It belongs to the IPP transferase family. Monomer. Mg(2+) serves as cofactor.

It carries out the reaction adenosine(37) in tRNA + dimethylallyl diphosphate = N(6)-dimethylallyladenosine(37) in tRNA + diphosphate. In terms of biological role, catalyzes the transfer of a dimethylallyl group onto the adenine at position 37 in tRNAs that read codons beginning with uridine, leading to the formation of N6-(dimethylallyl)adenosine (i(6)A). The polypeptide is tRNA dimethylallyltransferase (Pelodictyon phaeoclathratiforme (strain DSM 5477 / BU-1)).